Here is a 406-residue protein sequence, read N- to C-terminus: Succinylornithine transaminase (406 aa).

Lys-252 carries the post-translational modification N6-(pyridoxal phosphate)lysine.

It belongs to the class-III pyridoxal-phosphate-dependent aminotransferase family. AstC subfamily. Pyridoxal 5'-phosphate is required as a cofactor.

It catalyses the reaction N(2)-succinyl-L-ornithine + 2-oxoglutarate = N-succinyl-L-glutamate 5-semialdehyde + L-glutamate. It participates in amino-acid degradation; L-arginine degradation via AST pathway; L-glutamate and succinate from L-arginine: step 3/5. In terms of biological role, catalyzes the transamination of N(2)-succinylornithine and alpha-ketoglutarate into N(2)-succinylglutamate semialdehyde and glutamate. Can also act as an acetylornithine aminotransferase. This is Succinylornithine transaminase from Escherichia coli O45:K1 (strain S88 / ExPEC).